The sequence spans 434 residues: D-amino acid dehydrogenase (434 aa).

3–17 (VVILGSGVVGVASAW) lines the FAD pocket.

This sequence belongs to the DadA oxidoreductase family. FAD is required as a cofactor.

It carries out the reaction a D-alpha-amino acid + A + H2O = a 2-oxocarboxylate + AH2 + NH4(+). It participates in amino-acid degradation; D-alanine degradation; NH(3) and pyruvate from D-alanine: step 1/1. Functionally, oxidative deamination of D-amino acids. The protein is D-amino acid dehydrogenase of Serratia proteamaculans (strain 568).